The chain runs to 420 residues: MTLLALGINHKTAPVALRERVAFSPETLDQALGSLLAHPLVQGGVVLSTCNRTELYLSVEQQADLQEALVRWLCDYHQLEPDEVRQSLYWHLGDEAVSHLMRVASGLDSLVLGEPQILGQVKKAFAESRRGHGLSVDLERWFQKSFSVAKRVRTETEIGSHAVSVAFAACTLARQIFESLADVTVLLVGAGETIELVARHLREHKVKRLLIANRTPERAQRLAEDVGADVINLAEIDSQLGEADIIITSTASTLPIIGKGMVERALKQRRYQPMLLVDIAVPRDIEPEVAKLADAYLYTVDDLQAIIEKNLAQRKHAAVLAETIVAQESMDFMGWLRSQSAVEAIRDYRTQADSLREEFEARALAALRLGADPEQVVKDMAYKLTNRLIHTPTKSLQQAAREGDAERLQILRDGLGLDTH.

Substrate contacts are provided by residues 49–52 (TCNR), serine 109, 114–116 (EPQ), and glutamine 120. Residue cysteine 50 is the Nucleophile of the active site. 189 to 194 (GAGETI) is a binding site for NADP(+).

It belongs to the glutamyl-tRNA reductase family. Homodimer.

It catalyses the reaction (S)-4-amino-5-oxopentanoate + tRNA(Glu) + NADP(+) = L-glutamyl-tRNA(Glu) + NADPH + H(+). Its pathway is porphyrin-containing compound metabolism; protoporphyrin-IX biosynthesis; 5-aminolevulinate from L-glutamyl-tRNA(Glu): step 1/2. Functionally, catalyzes the NADPH-dependent reduction of glutamyl-tRNA(Glu) to glutamate 1-semialdehyde (GSA). In Sodalis glossinidius (strain morsitans), this protein is Glutamyl-tRNA reductase.